A 320-amino-acid chain; its full sequence is Probable serine proteinase inhibitor 1 (320 aa).

It belongs to the serpin family. Poxviruses subfamily.

This chain is Probable serine proteinase inhibitor 1 (SPI-1), found in Swinepox virus (strain Kasza) (SWPV).